A 66-amino-acid polypeptide reads, in one-letter code: Large ribosomal subunit protein uL29 (66 aa).

This sequence belongs to the universal ribosomal protein uL29 family.

This is Large ribosomal subunit protein uL29 from Helicobacter pylori (strain HPAG1).